Here is a 468-residue protein sequence, read N- to C-terminus: MIHKPLPRPPSSTAYIDGLRGILSIIIFNAHLTPIIILGYDNLSPPQPSPSPRNVLDIPLVASCVNNWELFTIPIVKLVYSASPAVCLFFAISGYVMSLKWVRYMSHSPTSTTTPARVFTSFGSSIFRRTLRLNLLAMASMIVPFVLVKTGFFDRTVVQRHGLTKLDRGMRFWLEQWEQFPVRRESWWEQICDLGENCARVVTVFVQRRDEAFSPRYNPVLWTIKADLRASLALSVTHLAMLGISRRSRQCFLAALVVMGIAVGSLECPLFWAGWIVAEIHHPAEQRTLKQRKSAEMPMQKTSRRGPDPFGKAVVLAIGCYFASYPTWKPEKAPMFTVLHTIVPDVVVPPRTWHSIGAILILYSLRDVPLARRVCESSIAQFLGTHSFAVYLVHFCLVISFGPGLFSWAWGVSGYEDLRSFAIGFGIAYAVLFIGVLLAAAMFHQFVEKPANKCVERLYRLSSVEQDV.

The next 7 helical transmembrane spans lie at 21-41 (GILS…LGYD), 70-90 (LFTI…CLFF), 133-153 (LNLL…TGFF), 252-272 (FLAA…PLFW), 308-328 (DPFG…YPTW), 388-408 (FAVY…LFSW), and 423-443 (IGFG…AAMF).

The protein belongs to the acyltransferase 3 family.

The protein localises to the membrane. It participates in secondary metabolite biosynthesis. Acyltransferase; part of the gene cluster that mediates the biosynthesis of squalestatin S1 (SQS1, also known as zaragozic acid A), a heavily oxidized fungal polyketide that offers potent cholesterol lowering activity by targeting squalene synthase (SS). SQS1 is composed of a 2,8-dioxobicyclic[3.2.1]octane-3,4,5-tricarboxyclic acid core that is connected to two lipophilic polyketide arms. These initial steps feature the priming of an unusual benzoic acid starter unit onto the highly reducing polyketide synthase pks2, followed by oxaloacetate extension and product release to generate a tricarboxylic acid containing product. The phenylalanine ammonia lyase (PAL) M7 and the acyl-CoA ligase M9 are involved in transforming phenylalanine into benzoyl-CoA. The citrate synthase-like protein R3 is involved in connecting the C-alpha-carbons of the hexaketide chain and oxaloacetate to afford the tricarboxylic acid unit. The potential hydrolytic enzymes, M8 and M10, are in close proximity to pks2 and may participate in product release. On the other side, the tetraketide arm is synthesized by a the squalestatin tetraketide synthase pks1 and enzymatically esterified to the core in the last biosynthetic step, by the acetyltransferase M4. The biosynthesis of the tetraketide must involve 3 rounds of chain extension. After the first and second rounds methyl-transfer occurs, and in all rounds of extension the ketoreductase and dehydratase are active. The enoyl reductase and C-MeT of pks1 are not active in the final round of extension. The acetyltransferase M4 appears to have a broad substrate selectivity for its acyl CoA substrate, allowing the in vitro synthesis of novel squalestatins. The biosynthesis of SQS1 requires several oxidative steps likely performed by oxidoreductases M1, R1 and R2. Finally, in support of the identification of the cluster as being responsible for SQS1 production, the cluster contains a gene encoding a putative squalene synthase (SS) R6, suggesting a likely mechanism for self-resistance. The protein is Acyltransferase R4 of Phoma sp. (strain ATCC 20986 / MF5453).